A 220-amino-acid chain; its full sequence is U1 small nuclear ribonucleoprotein C (220 aa).

The Matrin-type zinc finger occupies 4-36 (FFCDYCDVYLTHDSISVRKAHNSGRNHLRNVVD). Residues 197 to 220 (PLGGFPAGAPLPGAPPGYGPPGAK) are disordered. Positions 208 to 220 (PGAPPGYGPPGAK) are enriched in pro residues.

This sequence belongs to the U1 small nuclear ribonucleoprotein C family. As to quaternary structure, U1 snRNP is composed of the 7 core Sm proteins B/B', D1, D2, D3, E, F and G that assemble in a heptameric protein ring on the Sm site of the small nuclear RNA to form the core snRNP, and at least 3 U1 snRNP-specific proteins U1-70K, U1-A and U1-C. U1-C interacts with U1 snRNA and the 5' splice-site region of the pre-mRNA.

The protein resides in the nucleus. Its function is as follows. Component of the spliceosomal U1 snRNP, which is essential for recognition of the pre-mRNA 5' splice-site and the subsequent assembly of the spliceosome. U1-C is directly involved in initial 5' splice-site recognition for both constitutive and regulated alternative splicing. The interaction with the 5' splice-site seems to precede base-pairing between the pre-mRNA and the U1 snRNA. Stimulates commitment or early (E) complex formation by stabilizing the base pairing of the 5' end of the U1 snRNA and the 5' splice-site region. This is U1 small nuclear ribonucleoprotein C from Tuber melanosporum (strain Mel28) (Perigord black truffle).